Here is an 82-residue protein sequence, read N- to C-terminus: Exodeoxyribonuclease 7 small subunit (82 aa).

It belongs to the XseB family. Heterooligomer composed of large and small subunits.

The protein resides in the cytoplasm. It catalyses the reaction Exonucleolytic cleavage in either 5'- to 3'- or 3'- to 5'-direction to yield nucleoside 5'-phosphates.. Functionally, bidirectionally degrades single-stranded DNA into large acid-insoluble oligonucleotides, which are then degraded further into small acid-soluble oligonucleotides. This is Exodeoxyribonuclease 7 small subunit from Coxiella burnetii (strain CbuG_Q212) (Coxiella burnetii (strain Q212)).